The sequence spans 425 residues: Protein CLP1 homolog (425 aa).

ATP is bound by residues E18, K59, and 121–126 (DVGKST).

Belongs to the Clp1 family. Clp1 subfamily.

Its subcellular location is the nucleus. Required for endonucleolytic cleavage during polyadenylation-dependent pre-mRNA 3'-end formation. This is Protein CLP1 homolog (cbc) from Drosophila mojavensis (Fruit fly).